Consider the following 489-residue polypeptide: MAAAEPMGPAQVPMNSEVIVDPIQGQVNFEDVFVYFSQEEWVLLDEAQRLLYRDVMLENFALMASLGHTSFMSHIVASLVMGSEPWVPDWVDMTLAVATETPGGSDPGCWHGMEDEEIPFEQSFSIGMSQIRIPKGGPSTQKAYPCGTCGLVLKDILHLAEHQETHPGQKPYMCVLCGKQFCFSANLHQHQKQHSGEKPFRSDKSRPFLLNNCAVQSMEMSFVTGEACKDFLASSSIFEHHAPHNEWKPHSNTKCEEASHCGKRHYKCSECGKTFSRKDSLVQHQRVHTGERPYECGECGKTFSRKPILAQHQRIHTGEMPYECGICGKVFNHSSNLIVHQRVHTGARPYKCSECGKAYSHKSTLVQHESIHTGERPYECSECGKYFGHKYRLIKHWSVHTGARPYECIACGKFFSQSSDLIAHQRVHNGEKPYVCSECGKAFSHKHVLVQHHRIHTGERPYKCSECGKAFRQRASLIRHWKIHTGERP.

The 72-residue stretch at 27–98 (VNFEDVFVYF…DWVDMTLAVA (72 aa)) folds into the KRAB domain. 10 consecutive C2H2-type zinc fingers follow at residues 144 to 166 (YPCG…QETH), 172 to 194 (YMCV…QKQH), 266 to 288 (YKCS…QRVH), 294 to 316 (YECG…QRIH), 322 to 344 (YECG…QRVH), 350 to 372 (YKCS…ESIH), 378 to 400 (YECS…WSVH), 406 to 428 (YECI…QRVH), 434 to 456 (YVCS…HRIH), and 462 to 484 (YKCS…WKIH).

This sequence belongs to the krueppel C2H2-type zinc-finger protein family.

It localises to the nucleus. May be involved in transcriptional regulation. In Homo sapiens (Human), this protein is Zinc finger protein 772 (ZNF772).